Here is a 576-residue protein sequence, read N- to C-terminus: Proline--tRNA ligase (576 aa).

Belongs to the class-II aminoacyl-tRNA synthetase family. ProS type 1 subfamily. In terms of assembly, homodimer.

It localises to the cytoplasm. It carries out the reaction tRNA(Pro) + L-proline + ATP = L-prolyl-tRNA(Pro) + AMP + diphosphate. Functionally, catalyzes the attachment of proline to tRNA(Pro) in a two-step reaction: proline is first activated by ATP to form Pro-AMP and then transferred to the acceptor end of tRNA(Pro). As ProRS can inadvertently accommodate and process non-cognate amino acids such as alanine and cysteine, to avoid such errors it has two additional distinct editing activities against alanine. One activity is designated as 'pretransfer' editing and involves the tRNA(Pro)-independent hydrolysis of activated Ala-AMP. The other activity is designated 'posttransfer' editing and involves deacylation of mischarged Ala-tRNA(Pro). The misacylated Cys-tRNA(Pro) is not edited by ProRS. The chain is Proline--tRNA ligase from Bordetella pertussis (strain Tohama I / ATCC BAA-589 / NCTC 13251).